Consider the following 490-residue polypeptide: GTPase Der (490 aa).

EngA-type G domains follow at residues 3 to 166 (PVIA…PRDD) and 196 to 369 (IKIA…KSAV). GTP contacts are provided by residues 9–16 (GRPNVGKS), 56–60 (DTGGI), and 118–121 (NKVD). The disordered stretch occupies residues 162–189 (FPRDDDEPAEGEEEEVVAEGEEAKRIPG). The span at 164-181 (RDDDEPAEGEEEEVVAEG) shows a compositional bias: acidic residues. Residues 202–209 (GRPNVGKS), 249–253 (DTAGV), and 314–317 (NKWD) each bind GTP. The KH-like domain maps to 370–454 (TRWPTSRLTQ…PIRIEFKGGE (85 aa)). The interval 453–490 (GENPYEGNKNTLTDRQVNKKRRLMSHNKKASKKRRDKK) is disordered. Basic residues predominate over residues 470–490 (NKKRRLMSHNKKASKKRRDKK).

It belongs to the TRAFAC class TrmE-Era-EngA-EngB-Septin-like GTPase superfamily. EngA (Der) GTPase family. Associates with the 50S ribosomal subunit.

In terms of biological role, GTPase that plays an essential role in the late steps of ribosome biogenesis. This chain is GTPase Der, found in Pseudomonas fluorescens (strain Pf0-1).